Reading from the N-terminus, the 176-residue chain is Cytochrome b (176 aa).

3 consecutive transmembrane segments (helical) span residues 33-53, 77-98, and 113-133; these read FGSLLGVCLTMQIMTGLFLAM, WLLRYLHANGASMFFICLYLHI, and WNVGIILLFAVMATAFMGYVL. Residues histidine 83 and histidine 97 each coordinate heme b.

This sequence belongs to the cytochrome b family. In terms of assembly, the cytochrome bc1 complex contains 11 subunits: 3 respiratory subunits (MT-CYB, CYC1 and UQCRFS1), 2 core proteins (UQCRC1 and UQCRC2) and 6 low-molecular weight proteins (UQCRH/QCR6, UQCRB/QCR7, UQCRQ/QCR8, UQCR10/QCR9, UQCR11/QCR10 and a cleavage product of UQCRFS1). This cytochrome bc1 complex then forms a dimer. Requires heme b as cofactor.

It localises to the mitochondrion inner membrane. In terms of biological role, component of the ubiquinol-cytochrome c reductase complex (complex III or cytochrome b-c1 complex) that is part of the mitochondrial respiratory chain. The b-c1 complex mediates electron transfer from ubiquinol to cytochrome c. Contributes to the generation of a proton gradient across the mitochondrial membrane that is then used for ATP synthesis. The protein is Cytochrome b (MT-CYB) of Eumops perotis (Western bonneted bat).